The primary structure comprises 588 residues: D-3-phosphoglycerate dehydrogenase 3, chloroplastic (588 aa).

The transit peptide at 1 to 38 directs the protein to the chloroplast; it reads MATSLNLSSIFSSSSRLVTTPSSVFPIRQRRRIILVTS. NAD(+)-binding positions include 195–196, Asp-215, 274–276, and Asp-300; these read KV and VAR. Arg-276 is an active-site residue. The active site involves Glu-305. The active-site Proton donor is the His-324. 324–327 serves as a coordination point for NAD(+); it reads HLGA. The ACT domain maps to 516–588; the sequence is VILCRQVDQP…AIEEFVFLKL (73 aa).

The protein belongs to the D-isomer specific 2-hydroxyacid dehydrogenase family. In terms of tissue distribution, expressed in aerial parts. Not detected in roots and meristematic tissue. Expressed in cotyledons, adult leaves, stigma and anther filaments. Detected in the embryo.

Its subcellular location is the plastid. It is found in the chloroplast. The catalysed reaction is (2R)-3-phosphoglycerate + NAD(+) = 3-phosphooxypyruvate + NADH + H(+). It functions in the pathway amino-acid biosynthesis; L-serine biosynthesis; L-serine from 3-phospho-D-glycerate: step 1/3. With respect to regulation, partially inhibited by 1 mM serine. Involved in the plastidial phosphorylated pathway of serine biosynthesis (PPSB). The chain is D-3-phosphoglycerate dehydrogenase 3, chloroplastic (PGDH3) from Arabidopsis thaliana (Mouse-ear cress).